The chain runs to 217 residues: 3,4-dihydroxy-2-butanone 4-phosphate synthase (217 aa).

D-ribulose 5-phosphate-binding positions include 37–38 (RE), Asp-42, 150–154 (RRGHT), and Glu-174. Glu-38 provides a ligand contact to Mg(2+). Position 153 (His-153) interacts with Mg(2+).

It belongs to the DHBP synthase family. As to quaternary structure, homodimer. The cofactor is Mg(2+). It depends on Mn(2+) as a cofactor.

The catalysed reaction is D-ribulose 5-phosphate = (2S)-2-hydroxy-3-oxobutyl phosphate + formate + H(+). The protein operates within cofactor biosynthesis; riboflavin biosynthesis; 2-hydroxy-3-oxobutyl phosphate from D-ribulose 5-phosphate: step 1/1. Functionally, catalyzes the conversion of D-ribulose 5-phosphate to formate and 3,4-dihydroxy-2-butanone 4-phosphate. The sequence is that of 3,4-dihydroxy-2-butanone 4-phosphate synthase from Yersinia enterocolitica serotype O:8 / biotype 1B (strain NCTC 13174 / 8081).